A 287-amino-acid polypeptide reads, in one-letter code: Acetyl-coenzyme A carboxylase carboxyl transferase subunit beta (287 aa).

The region spanning 25–287 (VWTKCSACEQ…KMLNTHVIEE (263 aa)) is the CoA carboxyltransferase N-terminal domain. Zn(2+) is bound by residues Cys-29, Cys-32, Cys-48, and Cys-51. A C4-type zinc finger spans residues 29 to 51 (CSACEQVLYRAELERNLEVCPKC).

Belongs to the AccD/PCCB family. In terms of assembly, acetyl-CoA carboxylase is a heterohexamer composed of biotin carboxyl carrier protein (AccB), biotin carboxylase (AccC) and two subunits each of ACCase subunit alpha (AccA) and ACCase subunit beta (AccD). Zn(2+) serves as cofactor.

It localises to the cytoplasm. It carries out the reaction N(6)-carboxybiotinyl-L-lysyl-[protein] + acetyl-CoA = N(6)-biotinyl-L-lysyl-[protein] + malonyl-CoA. Its pathway is lipid metabolism; malonyl-CoA biosynthesis; malonyl-CoA from acetyl-CoA: step 1/1. Component of the acetyl coenzyme A carboxylase (ACC) complex. Biotin carboxylase (BC) catalyzes the carboxylation of biotin on its carrier protein (BCCP) and then the CO(2) group is transferred by the transcarboxylase to acetyl-CoA to form malonyl-CoA. The protein is Acetyl-coenzyme A carboxylase carboxyl transferase subunit beta of Aeromonas hydrophila subsp. hydrophila (strain ATCC 7966 / DSM 30187 / BCRC 13018 / CCUG 14551 / JCM 1027 / KCTC 2358 / NCIMB 9240 / NCTC 8049).